A 1987-amino-acid polypeptide reads, in one-letter code: MQSFREQSSYHGNQQSYPQEVHSSSRIEEFSPRQAQMFQNFGGAGGGSSGTGSSSSGRRGTAAAAAAMASETSGHQGYQGFRKEAGDFYYMAGNKDTVAAGTPQPPQRRPSGPVQSYGPPQGSSFGNQYASEGHVSQFQAQHSALGGVSHYQQDYTGPFSPGSAQYQQQASSQQQQQQQQQQQQQQQQQQQQVQQLRQQLYQSHQPLPQTTGQPASGSSHLQPMQRPSTLPSSAGYQLRVGQFGQHYQSSASSSSSSSFPSPQRFSQSGQSYDGSYSVNAGSQYEGHNVGSNAQAYGTQSNYSYQPQSMKNFEQAKIPPGNQQGQQQQQQQPQPQQQQPQQQQQQQQQQQHPPQHVMQYTNAATKMPLQSQVGQYNQPEVPVRSPMQFHQNFSPISNPSPAASVVQSPSCSSTPSPLMQSGENLQCGQGNVPMSSRNRILQLMPQLSPTPSMMPSPNSHAAGFKGFGLEGVPEKRLTDPGLSSLSALSSQVANLPNTVQHMLLSDALTPQKKTSKRPSSSSKKADSCTNSEGSSQPEEQLKSPMAESLDGGCSSSSEDQGERVRQLSGQSTSSDTTYKCGASEKAGSSPTQGAQNEAPRLSTSPATRDEAASPGAKDTSLSSEGNTKVNEKTVGVIVSREAMTGRVEKSGGQDKGSQEDDPAASQRPPSNSGVKEISHTSLPQPDPPGGGSKGNKNGDNNSSNHNGEGNGPSSHSAVGPSFTGRTEPSKSPGSLRYSYKESFGSAVPRNVSGYPQYPSGQEKGDFGSHGERKGRNEKFPSLLQEVLQGYHHHPDRRYPRSAQEHQGMASGLEGTARPNILVSQTNELASRGLLNKSIGSLLENPHWGPWERKSSSTAPEMKQINLSDYPIPRKFEIEPPSSAHEPGGSLSERRSVICDISPLRQIVRDPGAHSLGHMGTDARIGRNERLNPSLSQSVILPGGLVSMETKLKSQSGQIKEEDFEQSKSQASFNKKSGDHCHPTSIKHETYRGNASPGAAAHDSISDYGPQDSRSTPMRRVPGRVGSRETMRGRSSSQYHDFAEKLKMSPGRSRGPGGDPHHMNPHMTFSERANRSSLHAPFSPNSESLASAYHTNTRAHAYGDPNTGLNSQLHYKRQMYQQQQEEYKDWASSSAQGVIAAAQHRQEGPRKSPRQQQFLDRVRSPLKNDKDGMMYGPPVGTYHDPSTQEAGRCLMSSDGLPAKSMELKHSSQKLQESCWDLSRQTSPAKSSGPPGMSNQKRYGPPHEPDGHGLAESAQSSKPSNVMLRLPGQEDHSSQNPLIMRRRVRSFISPIPSKRQSQDVKNSNADDKGRLLHPSKEGADKAYNSYSHLSHSQDIKSIPKRDSSKDLPNPDNRNCPAVTLTSPAKTKILPPRKGRGLKLEAIVQKITSPNIRRSASANSAEAGGDTVTLDDILSLKSGPPEGGTVATQEAEMEKRKCEVVSDLVSVTNQESNVEKPLPGPSEEWRGSGDDKVKTEAHVETASTGKEPSGTMTSTASQKPGGNQGRPDGSLGGAAPLIFPDSKNVAPVGILAPEANPKAEEKENDTVMISPKQESFPPKGYFPSGKKKGRPIGSVNKQKKQQQQPPPPPQPPQMPEGSADGEPKPKKQRQRRERRKPGAQPRKRKTKQAVPIVEPQEPEIKLKYATQPLDKTDAKNKSFFPYIHVVNKCELGAVCTIINAEEEEQTKLVRSRKGQRSLTPPPSSTESKVLPASSFMLQGPVVTESSVMGHLVCCLCGKWASYRNMGDLFGPFYPQDYAATLPKNPPPKRSSEMQSKVKVRHKSASNGSKTDTEEEEEQQQQKEQRSLAAHPRFKRRHRSEDCGGGPRSLSRGLPCKKAATEGSSEKTVSDTKPSVPTTSEGGPELELQIPELPLDSNEFWVHEGCILWANGIYLVCGRLYGLQEALEIAREMKCSHCQEAGATLGCYNKGCSFRYHYPCAIDADCLLHEENFSVRCPKHKPPLPCPLPPLQNKTAKGSLSTEQSERG.

The segment covering 1–22 (MQSFREQSSYHGNQQSYPQEVH) has biased composition (polar residues). Disordered stretches follow at residues 1 to 79 (MQSF…QGYQ), 96 to 432 (DTVA…GNVP), 446 to 481 (LSPT…DPGL), 502 to 816 (LLSD…GTAR), and 844 to 891 (PHWG…SLSE). A compositionally biased stretch (low complexity) spans 51–74 (TGSSSSGRRGTAAAAAAMASETSG). At R59 the chain carries Omega-N-methylarginine. Positions 121–142 (QGSSFGNQYASEGHVSQFQAQH) are enriched in polar residues. Low complexity predominate over residues 163–205 (SAQYQQQASSQQQQQQQQQQQQQQQQQQQQVQQLRQQLYQSHQ). Over residues 206-235 (PLPQTTGQPASGSSHLQPMQRPSTLPSSAG) the composition is skewed to polar residues. The segment covering 248–277 (QSSASSSSSSSFPSPQRFSQSGQSYDGSYS) has biased composition (low complexity). Over residues 289 to 311 (VGSNAQAYGTQSNYSYQPQSMKN) the composition is skewed to polar residues. K316 participates in a covalent cross-link: Glycyl lysine isopeptide (Lys-Gly) (interchain with G-Cter in SUMO2). The segment covering 322-354 (QQGQQQQQQQPQPQQQQPQQQQQQQQQQQHPPQ) has biased composition (low complexity). Residues 357 to 377 (MQYTNAATKMPLQSQVGQYNQ) are compositionally biased toward polar residues. A compositionally biased stretch (low complexity) spans 396–416 (SNPSPAASVVQSPSCSSTPSP). Polar residues predominate over residues 417-432 (LMQSGENLQCGQGNVP). Low complexity predominate over residues 446–456 (LSPTPSMMPSP). Phosphoserine is present on residues S447 and S458. Composition is skewed to polar residues over residues 526–537 (SCTNSEGSSQPE), 566–576 (LSGQSTSSDTT), and 585–605 (AGSS…TSPA). S567, S588, S603, and S612 each carry phosphoserine. Over residues 618 to 627 (TSLSSEGNTK) the composition is skewed to polar residues. K631 is subject to N6-acetyllysine. Over residues 645 to 657 (RVEKSGGQDKGSQ) the composition is skewed to basic and acidic residues. Residues 666–682 (RPPSNSGVKEISHTSLP) are compositionally biased toward polar residues. The residue at position 669 (S669) is a Phosphoserine. Residues 693 to 715 (GNKNGDNNSSNHNGEGNGPSSHS) show a composition bias toward low complexity. Residues 722 to 731 (TGRTEPSKSP) show a composition bias toward polar residues. Residues K739, K762, K777, K852, K861, and K873 each participate in a glycyl lysine isopeptide (Lys-Gly) (interchain with G-Cter in SUMO2) cross-link. The segment covering 761-777 (EKGDFGSHGERKGRNEK) has biased composition (basic and acidic residues). S900 is subject to Phosphoserine. Residues K949 and K951 each participate in a glycyl lysine isopeptide (Lys-Gly) (interchain with G-Cter in SUMO2) cross-link. The disordered stretch occupies residues 949–1065 (KLKSQSGQIK…GDPHHMNPHM (117 aa)). K958 participates in a covalent cross-link: Glycyl lysine isopeptide (Lys-Gly) (interchain with G-Cter in SUMO1); alternate. A Glycyl lysine isopeptide (Lys-Gly) (interchain with G-Cter in SUMO2); alternate cross-link involves residue K958. Over residues 974 to 989 (KSGDHCHPTSIKHETY) the composition is skewed to basic and acidic residues. A Glycyl lysine isopeptide (Lys-Gly) (interchain with G-Cter in SUMO2) cross-link involves residue K985. A phosphoserine mark is found at S994 and S1033. K1043 participates in a covalent cross-link: Glycyl lysine isopeptide (Lys-Gly) (interchain with G-Cter in SUMO2). R1052 is modified (omega-N-methylarginine). Residue S1081 is modified to Phosphoserine. Residues K1114, K1126, K1165, K1201, K1206, K1211, K1238, K1259, K1295, and K1302 each participate in a glycyl lysine isopeptide (Lys-Gly) (interchain with G-Cter in SUMO2) cross-link. Residues 1136–1372 (VIAAAQHRQE…SPAKTKILPP (237 aa)) form a disordered region. Residues 1158–1170 (DRVRSPLKNDKDG) show a composition bias toward basic and acidic residues. The tract at residues 1198-1219 (LPAKSMELKHSSQKLQESCWDL) is leucine-zipper. The Nuclear localization signal signature appears at 1282–1295 (RRRVRSFISPIPSK). Composition is skewed to basic and acidic residues over residues 1305–1321 (NADD…EGAD) and 1332–1346 (HSQD…DSSK). The residue at position 1333 (S1333) is a Phosphoserine. K1337 participates in a covalent cross-link: Glycyl lysine isopeptide (Lys-Gly) (interchain with G-Cter in SUMO2). Position 1363 is a phosphoserine (S1363). K1366 participates in a covalent cross-link: Glycyl lysine isopeptide (Lys-Gly) (interchain with G-Cter in SUMO2). Position 1389 is a phosphoserine (S1389). The segment at 1415–1434 (SLKSGPPEGGTVATQEAEME) is disordered. Glycyl lysine isopeptide (Lys-Gly) (interchain with G-Cter in SUMO2) cross-links involve residues K1417, K1437, K1456, and K1474. Residues 1446–1636 (SVTNQESNVE…KQAVPIVEPQ (191 aa)) form a disordered region. Positions 1463–1479 (EEWRGSGDDKVKTEAHV) are enriched in basic and acidic residues. The segment covering 1481-1501 (TASTGKEPSGTMTSTASQKPG) has biased composition (polar residues). K1538 participates in a covalent cross-link: Glycyl lysine isopeptide (Lys-Gly) (interchain with G-Cter in SUMO2). S1550 is subject to Phosphoserine. K1552 participates in a covalent cross-link: Glycyl lysine isopeptide (Lys-Gly) (interchain with G-Cter in SUMO2). The a.T hook DNA-binding region spans 1565 to 1579 (GKKKGRPIGSVNKQK). The span at 1584–1594 (QPPPPPQPPQM) shows a compositional bias: pro residues. The Nuclear localization signal motif lies at 1604 to 1628 (KPKKQRQRRERRKPGAQPRKRKTKQ). The span at 1606 to 1627 (KKQRQRRERRKPGAQPRKRKTK) shows a compositional bias: basic residues. K1641 is covalently cross-linked (Glycyl lysine isopeptide (Lys-Gly) (interchain with G-Cter in SUMO2)). 2 disordered regions span residues 1685-1710 (QTKL…SKVL) and 1760-1865 (TLPK…GPEL). The residue at position 1697 (S1697) is a Phosphoserine. Phosphothreonine is present on residues T1699, T1790, and T1792. Residues 1812–1819 (RFKRRHRS) carry the Nuclear localization signal motif. A compositionally biased stretch (polar residues) spans 1850-1859 (DTKPSVPTTS). The C2HC pre-PHD-type; degenerate zinc finger occupies 1856–1892 (PTTSEGGPELELQIPELPLDSNEFWVHEGCILWANGI). Residues 1912 to 1960 (MKCSHCQEAGATLGCYNKGCSFRYHYPCAIDADCLLHEENFSVRCPKHK) form a PHD-type zinc finger. The interval 1966–1987 (PLPPLQNKTAKGSLSTEQSERG) is disordered. Over residues 1971–1987 (QNKTAKGSLSTEQSERG) the composition is skewed to polar residues.

As to quaternary structure, homodimer. Interacts with RNF4 and JUN. Binds to the regulatory region of MMP3. In terms of tissue distribution, expressed in brain, lung, liver, kidney and testes.

It is found in the nucleus. In terms of biological role, transcriptional activator that binds to the regulatory region of MMP3 and thereby controls stromelysin expression. It stimulates the activity of various transcriptional activators such as JUN, SP1, PAX6 and ETS1, suggesting a function as a coactivator. This chain is Transcription factor 20 (Tcf20), found in Mus musculus (Mouse).